The primary structure comprises 247 residues: Probable transcriptional regulatory protein ECA2494 (247 aa).

It belongs to the TACO1 family.

It is found in the cytoplasm. The polypeptide is Probable transcriptional regulatory protein ECA2494 (Pectobacterium atrosepticum (strain SCRI 1043 / ATCC BAA-672) (Erwinia carotovora subsp. atroseptica)).